Consider the following 177-residue polypeptide: MSRVAKAPVTIPAGVEVTLNGQELSIKGGKGSLVRSIHAGVEVTKEDNVLKFAPRDGIAGADAQAGTARALANNMVIGVTQGFERKLQLVGVGYKASIKGNAVALALGFSHPVEHALPAGVTAECPTATEIVLRGVDKQLVGQVAADIRSYRAPEPYKGKGVRYANEQVRTKEAKKK.

It belongs to the universal ribosomal protein uL6 family. Part of the 50S ribosomal subunit.

This protein binds to the 23S rRNA, and is important in its secondary structure. It is located near the subunit interface in the base of the L7/L12 stalk, and near the tRNA binding site of the peptidyltransferase center. This is Large ribosomal subunit protein uL6 from Aeromonas salmonicida (strain A449).